The chain runs to 65 residues: Large ribosomal subunit protein bL28 (65 aa).

This sequence belongs to the bacterial ribosomal protein bL28 family.

This Lachnoclostridium phytofermentans (strain ATCC 700394 / DSM 18823 / ISDg) (Clostridium phytofermentans) protein is Large ribosomal subunit protein bL28.